A 419-amino-acid polypeptide reads, in one-letter code: uncharacterized protein (419 aa).

Positions 38, 44, 47, and 126 each coordinate [4Fe-4S] cluster. S-adenosyl-L-methionine contacts are provided by Q250, Y280, E301, and D346. Residue C373 is the Nucleophile of the active site.

The protein belongs to the class I-like SAM-binding methyltransferase superfamily. RNA M5U methyltransferase family.

This is an uncharacterized protein from Prochlorococcus marinus (strain SARG / CCMP1375 / SS120).